Consider the following 357-residue polypeptide: uncharacterized protein (357 aa).

Helical transmembrane passes span 21 to 41, 86 to 106, and 135 to 155; these read FIKI…LFSW, FFCL…CTLF, and GGFV…PVIF. 2 disordered regions span residues 184–229 and 283–357; these read DKNK…AMSD and KAGS…NKRN. Residues 195 to 223 are compositionally biased toward low complexity; it reads TTNTTNFSGNGSSSSTTNATSSSSSQANN. 2 stretches are compositionally biased toward basic and acidic residues: residues 305 to 314 and 322 to 337; these read KIEEYDNQKQ and KETN…EKET. Residues 305-337 are a coiled coil; that stretch reads KIEEYDNQKQEEEENEEKETNKQQTQKDDEKET. A compositionally biased stretch (basic residues) spans 346 to 357; it reads KKSKKGKKNKRN.

Its subcellular location is the membrane. This is an uncharacterized protein from Dictyostelium discoideum (Social amoeba).